A 335-amino-acid chain; its full sequence is Acetyl-coenzyme A carboxylase carboxyl transferase subunit alpha (335 aa).

One can recognise a CoA carboxyltransferase C-terminal domain in the interval 48 to 308 (VLESKVDALR…KSLLVEELRM (261 aa)).

Belongs to the AccA family. Acetyl-CoA carboxylase is a heterohexamer composed of biotin carboxyl carrier protein (AccB), biotin carboxylase (AccC) and two subunits each of ACCase subunit alpha (AccA) and ACCase subunit beta (AccD).

Its subcellular location is the cytoplasm. It carries out the reaction N(6)-carboxybiotinyl-L-lysyl-[protein] + acetyl-CoA = N(6)-biotinyl-L-lysyl-[protein] + malonyl-CoA. It participates in lipid metabolism; malonyl-CoA biosynthesis; malonyl-CoA from acetyl-CoA: step 1/1. Functionally, component of the acetyl coenzyme A carboxylase (ACC) complex. First, biotin carboxylase catalyzes the carboxylation of biotin on its carrier protein (BCCP) and then the CO(2) group is transferred by the carboxyltransferase to acetyl-CoA to form malonyl-CoA. The chain is Acetyl-coenzyme A carboxylase carboxyl transferase subunit alpha from Chlorobium phaeobacteroides (strain BS1).